Consider the following 563-residue polypeptide: MAEMFKVESPHVRYLKDVIEADYSYDTTQVYEEKGVTKVKPCSTKFTFHTERKVPKLGVMLVGWGGNNGTTVTAAVLANRLGLSWMTKTGKKVANYYGSLFQSSTVCLGRGSSGEVFVPFRDLLPMVNPNDLVFDGWDISSLNLADAMFRAEVLDWQLQEQLRPYMEKMKPRPSIYIPEFIAANQEDRADHTIHGTKAEQVQKIREDIQDFKRTSGVDKVIVLWTANTERFCDIIPGVNDTADNLLKAIENGLEVSPSTMFAVASILEGCAFINGSPQNTFVPGAIELAIRHNVFIGGDDFKSGQTKIKSVLMDFLVSAGLKPVSIVSYNHLGNNDGKNLSAPQQFRSKEISKSNVVDDMVQSNPILYGPNEKPDHCVVIKYVPYVGDSKRAMDEYTSEIMMGGANTIVLHNTCEDSLLASPIFLDLVLLTELCQRITFRTETDQEFQTFHSVLSILSFLCKAPLVPAGTPVVNAFFRQRNCIENILRACLGLSPQNHMMLEHKMQRSFVSLKRPSVDCNAYPISSKKGNGVNGFHPPGISNGLSHSNGLGKTVISSDIEIEN.

It belongs to the myo-inositol 1-phosphate synthase family. The cofactor is NAD(+).

It is found in the cytoplasm. The enzyme catalyses D-glucose 6-phosphate = 1D-myo-inositol 3-phosphate. It participates in polyol metabolism; myo-inositol biosynthesis; myo-inositol from D-glucose 6-phosphate: step 1/2. Its function is as follows. Key enzyme in myo-inositol biosynthesis pathway that catalyzes the conversion of glucose 6-phosphate to 1-myo-inositol 1-phosphate in a NAD-dependent manner. Rate-limiting enzyme in the synthesis of all inositol-containing compounds. In Xenopus laevis (African clawed frog), this protein is Inositol-3-phosphate synthase 1-B (isyna1-b).